Consider the following 162-residue polypeptide: MAELIIVYFSSKSNNTHRFVQKLGLPAQRIPVDNRPLEVSTHYLLIVPTYAAGGSDAKGAVSKQVIRFLNNPNNRKHCKGVISSGNTNFGDTFALAGPIISQKLQVPLLHQFELLGTATDVKKVQAIFARLKHHTHDKQKQTNNLITERTHPCHKPMRHTSH.

This sequence belongs to the NrdI family.

Functionally, probably involved in ribonucleotide reductase function. The chain is Protein NrdI from Streptococcus pyogenes serotype M1.